A 422-amino-acid polypeptide reads, in one-letter code: RNA exonuclease 4 (422 aa).

The tract at residues 1-194 (MGKAKVPASK…APAPPTEEDI (194 aa)) is disordered. The residue at position 15 (Ser15) is a Phosphoserine. Residues 26–40 (LTRKKNKKKKRFWKS) are compositionally biased toward basic residues. 2 positions are modified to phosphoserine: Ser96 and Ser111. Basic and acidic residues-rich tracts occupy residues 106 to 127 (NKKE…DQEA) and 151 to 176 (GTEH…DIEH). A Glycyl lysine isopeptide (Lys-Gly) (interchain with G-Cter in SUMO2) cross-link involves residue Lys115. Residues 243–394 (ALALDCEMVG…QDAQAAMRLY (152 aa)) form the Exonuclease domain.

The protein belongs to the REXO4 family. Can bind ESR1 and ESR2. This interaction is abrogated by estrogen and augmented by tamoxifen treatment.

Its subcellular location is the nucleus. It is found in the nucleolus. This chain is RNA exonuclease 4 (REXO4), found in Homo sapiens (Human).